Reading from the N-terminus, the 758-residue chain is Protein hunchback (758 aa).

Disordered stretches follow at residues 30–51 (EPGH…PIPS) and 172–214 (EKLQ…EDMK). Residues 39 to 51 (SVASSPRQSPIPS) show a composition bias toward polar residues. Thr-178 bears the Phosphothreonine mark. Phosphoserine occurs at positions 188, 207, 209, and 210. The segment covering 198 to 214 (EPEKEHDQMSNSSEDMK) has biased composition (basic and acidic residues). C2H2-type zinc fingers lie at residues 240–262 (YKCK…TRTH), 269–291 (LQCP…IRKH), 297–319 (FQCD…RKSH), and 325–349 (YRCA…KYGH). Disordered regions lie at residues 365–416 (LVID…PVAT) and 513–536 (QLQQ…YERK). 2 stretches are compositionally biased toward low complexity: residues 398–415 (VAAV…QPVA) and 513–522 (QLQQQNQQQS). The segment covering 523–532 (DNEEEEQDDE) has biased composition (acidic residues). 2 positions are modified to phosphoserine: Ser-537 and Ser-540. A disordered region spans residues 603–695 (MTSPEQLKVP…TTSAVAAPPS (93 aa)). Residues 652–695 (ANTSASSTASSSGNSSNASSNSNGNSSSNSSSNGTTSAVAAPPS) show a composition bias toward low complexity. 2 C2H2-type zinc fingers span residues 705–727 (YECK…MGYH) and 733–757 (FKCN…RNAH).

It belongs to the hunchback C2H2-type zinc-finger protein family. As to expression, in embryo, expression of maternal transcript is highest in anterior region. Zygotic transcript is expressed in anterior region until the beginning of gastrulation and in posterior region until early gastrulation. After this, it is expressed in developing nervous system.

It is found in the nucleus. Its function is as follows. Gap class segmentation protein that controls development of head structures. The chain is Protein hunchback from Drosophila melanogaster (Fruit fly).